A 61-amino-acid polypeptide reads, in one-letter code: Metallothionein-2 (61 aa).

M1 carries the post-translational modification N-acetylmethionine. Residues 1–29 (MDPNCSCATDGSCSCAGSCKCKECKCTTC) form a beta region. C5, C7, C13, C15, C19, C21, C24, C26, C29, C33, C34, C36, C37, C41, C44, C48, C50, and C57 together coordinate a divalent metal cation. An alpha region spans residues 30 to 61 (KKSCCSCCPVGCAKCSQGCVCKEASDKCSCCA). S58 bears the Phosphoserine mark. 2 residues coordinate a divalent metal cation: C59 and C60.

The protein belongs to the metallothionein superfamily. Type 1 family.

Metallothioneins have a high content of cysteine residues that bind various heavy metals; these proteins are transcriptionally regulated by both heavy metals and glucocorticoids. The sequence is that of Metallothionein-2 (MT2) from Cricetulus griseus (Chinese hamster).